Reading from the N-terminus, the 426-residue chain is Enolase (426 aa).

Residue Gln-162 coordinates (2R)-2-phosphoglycerate. Residue Glu-204 is the Proton donor of the active site. 3 residues coordinate Mg(2+): Asp-241, Glu-284, and Asp-311. (2R)-2-phosphoglycerate-binding residues include Lys-336, Arg-365, Ser-366, and Lys-387. Catalysis depends on Lys-336, which acts as the Proton acceptor.

This sequence belongs to the enolase family. In terms of assembly, component of the RNA degradosome, a multiprotein complex involved in RNA processing and mRNA degradation. Requires Mg(2+) as cofactor.

It localises to the cytoplasm. The protein resides in the secreted. Its subcellular location is the cell surface. The catalysed reaction is (2R)-2-phosphoglycerate = phosphoenolpyruvate + H2O. Its pathway is carbohydrate degradation; glycolysis; pyruvate from D-glyceraldehyde 3-phosphate: step 4/5. Catalyzes the reversible conversion of 2-phosphoglycerate (2-PG) into phosphoenolpyruvate (PEP). It is essential for the degradation of carbohydrates via glycolysis. This chain is Enolase, found in Thioalkalivibrio sulfidiphilus (strain HL-EbGR7).